Consider the following 346-residue polypeptide: N-acetyl-gamma-glutamyl-phosphate reductase (346 aa).

Residue C149 is part of the active site.

It belongs to the NAGSA dehydrogenase family. Type 1 subfamily.

It is found in the cytoplasm. The catalysed reaction is N-acetyl-L-glutamate 5-semialdehyde + phosphate + NADP(+) = N-acetyl-L-glutamyl 5-phosphate + NADPH + H(+). The protein operates within amino-acid biosynthesis; L-arginine biosynthesis; N(2)-acetyl-L-ornithine from L-glutamate: step 3/4. In terms of biological role, catalyzes the NADPH-dependent reduction of N-acetyl-5-glutamyl phosphate to yield N-acetyl-L-glutamate 5-semialdehyde. This Desulfotalea psychrophila (strain LSv54 / DSM 12343) protein is N-acetyl-gamma-glutamyl-phosphate reductase.